The primary structure comprises 153 residues: Ribosomal RNA large subunit methyltransferase H (153 aa).

Residues Leu-63, Gly-102, and 121 to 126 (FGKITL) each bind S-adenosyl-L-methionine.

This sequence belongs to the RNA methyltransferase RlmH family. In terms of assembly, homodimer.

The protein localises to the cytoplasm. The enzyme catalyses pseudouridine(1915) in 23S rRNA + S-adenosyl-L-methionine = N(3)-methylpseudouridine(1915) in 23S rRNA + S-adenosyl-L-homocysteine + H(+). Specifically methylates the pseudouridine at position 1915 (m3Psi1915) in 23S rRNA. This is Ribosomal RNA large subunit methyltransferase H from Sulfurovum sp. (strain NBC37-1).